Here is a 1071-residue protein sequence, read N- to C-terminus: ATP-dependent helicase/deoxyribonuclease subunit B (1071 aa).

It belongs to the helicase family. AddB/RexB type 2 subfamily. Heterodimer of AddA and RexB. Mg(2+) serves as cofactor.

Its function is as follows. The heterodimer acts as both an ATP-dependent DNA helicase and an ATP-dependent, dual-direction single-stranded exonuclease. Recognizes the chi site generating a DNA molecule suitable for the initiation of homologous recombination. This subunit has 5' -&gt; 3' nuclease activity but not helicase activity. The protein is ATP-dependent helicase/deoxyribonuclease subunit B of Streptococcus pyogenes serotype M12 (strain MGAS2096).